A 289-amino-acid polypeptide reads, in one-letter code: Elongation factor Ts (289 aa).

Residues 80-83 (TDFV) are involved in Mg(2+) ion dislocation from EF-Tu.

The protein belongs to the EF-Ts family.

Its subcellular location is the cytoplasm. Functionally, associates with the EF-Tu.GDP complex and induces the exchange of GDP to GTP. It remains bound to the aminoacyl-tRNA.EF-Tu.GTP complex up to the GTP hydrolysis stage on the ribosome. The chain is Elongation factor Ts from Francisella tularensis subsp. holarctica (strain LVS).